The following is a 232-amino-acid chain: uncharacterized protein (232 aa).

7 helical membrane-spanning segments follow: residues Phe-17–Tyr-37, Met-54–Leu-74, Ala-84–Tyr-104, Gly-107–Gly-127, Gly-138–Phe-158, Ser-161–Tyr-181, and Met-203–Leu-223.

It belongs to the BI1 family.

It localises to the cell membrane. This is an uncharacterized protein from Borreliella burgdorferi (strain ATCC 35210 / DSM 4680 / CIP 102532 / B31) (Borrelia burgdorferi).